The primary structure comprises 121 residues: Basic phospholipase A2 BmjeTX-II (121 aa).

Disulfide bonds link Cys-26–Cys-114, Cys-28–Cys-45, Cys-44–Cys-95, Cys-50–Cys-121, Cys-51–Cys-88, Cys-58–Cys-82, and Cys-76–Cys-86. Tyr-27, Gly-29, and Gly-31 together coordinate Ca(2+). His-48 is a catalytic residue. Ca(2+) is bound at residue Asp-49. Asp-89 is an active-site residue.

Ca(2+) is required as a cofactor. Expressed by the venom gland.

It is found in the secreted. It catalyses the reaction a 1,2-diacyl-sn-glycero-3-phosphocholine + H2O = a 1-acyl-sn-glycero-3-phosphocholine + a fatty acid + H(+). Its function is as follows. Snake venom phospholipase A2 (PLA2) that induces blockade of neuromuscular contraction in an indirectly stimulated chick biventer cervicis nerve-muscle preparation. Does not inhibit contraction of chick biventer cervicic nerve-muscle preparation in response to treatment with acetylcholine or KCl. The neuromuscular blockade is mediated by inhibitory action at the presynaptic motor nerve endings. Lyses skeletal myoblasts and myotubes in vitro, and intramuscular injection causes local muscle necrosis. Induces edema in the mouse foot pad. Induces a transient increase of IL-6 levels. PLA2 catalyzes the calcium-dependent hydrolysis of the 2-acyl groups in 3-sn-phosphoglycerides. The sequence is that of Basic phospholipase A2 BmjeTX-II from Bothrops marajoensis (Marajo lancehead).